Reading from the N-terminus, the 330-residue chain is Aspartate--ammonia ligase (330 aa).

The protein belongs to the class-II aminoacyl-tRNA synthetase family. AsnA subfamily. Homodimer.

Its subcellular location is the cytoplasm. It carries out the reaction L-aspartate + NH4(+) + ATP = L-asparagine + AMP + diphosphate + H(+). It functions in the pathway amino-acid biosynthesis; L-asparagine biosynthesis; L-asparagine from L-aspartate (ammonia route): step 1/1. This Salmonella typhimurium (strain LT2 / SGSC1412 / ATCC 700720) protein is Aspartate--ammonia ligase.